The sequence spans 279 residues: Putative E3 ubiquitin-protein ligase C36B7.05c (279 aa).

The segment at 27–122 (DDESAQCNNC…VCVNCRQQLS (96 aa)) adopts an FYVE-type zinc-finger fold. Zn(2+) contacts are provided by C33, C36, C49, C52, C57, C60, C114, and C117. S200 is subject to Phosphoserine. The RING-type; atypical zinc finger occupies 230–273 (CIICFEEFAAGDRVARIEYCLCIFHLKCYRDWLSTGAAGCPVHA).

The protein resides in the cytoplasm. Its subcellular location is the nucleus. The protein localises to the endosome membrane. It localises to the vacuole membrane. The enzyme catalyses S-ubiquitinyl-[E2 ubiquitin-conjugating enzyme]-L-cysteine + [acceptor protein]-L-lysine = [E2 ubiquitin-conjugating enzyme]-L-cysteine + N(6)-ubiquitinyl-[acceptor protein]-L-lysine.. Its pathway is protein modification; protein ubiquitination. Functions as an E3 ubiquitin-protein ligase. Binds phospholipid vesicles containing phosphatidylinositol 3-phosphate. The chain is Putative E3 ubiquitin-protein ligase C36B7.05c from Schizosaccharomyces pombe (strain 972 / ATCC 24843) (Fission yeast).